Reading from the N-terminus, the 100-residue chain is Small ribosomal subunit protein uS14c (100 aa).

The protein belongs to the universal ribosomal protein uS14 family. As to quaternary structure, part of the 30S ribosomal subunit.

Its subcellular location is the plastid. It localises to the chloroplast. Its function is as follows. Binds 16S rRNA, required for the assembly of 30S particles. The protein is Small ribosomal subunit protein uS14c of Ceratophyllum demersum (Rigid hornwort).